The following is a 437-amino-acid chain: MVSWRRFCWHYHGWTLGCYMLLAIIALKLSLRLKCDFDVMDLDSKEFQSQYCRDLLYKTLELPAKSSINCSGVIRGEQKAVTQALLNNLELKRKRQSFTEADYLSMTADCEHFKTQRKFIQVPLSKEEANFPIAYSMVIHEKIENFERLLRAVYTPQNIYCVHVDQKSSETFQQAVRAIVSCFPNVFIANKLVSVVYASWSRVQADLNCMEDLLQSPVPWEYLLNTCGTDFPIKTNAEMVKALKLLNGQNSMESEVPPPHKTFRWKYHYEVADTLYRTSKEKTPPPNNITMFTGNAYMVASRDFIEHVLSNSKARQLIEWVKDTYSPDEHLWATLQRASWMPGSDPLHPKFDLSDMRSIARLTKWQDHEGDIENGAPYTSCSGIHQRAICVYGSGDLHWILQNHHLLANKFDPKVDDNVLQCLEEYLRHKAIYGTEL.

Residues 1–6 (MVSWRR) are Cytoplasmic-facing. A helical; Signal-anchor for type II membrane protein transmembrane segment spans residues 7-27 (FCWHYHGWTLGCYMLLAIIAL). Topologically, residues 28–437 (KLSLRLKCDF…RHKAIYGTEL (410 aa)) are lumenal. Intrachain disulfides connect cysteine 70-cysteine 227, cysteine 161-cysteine 381, cysteine 182-cysteine 209, and cysteine 390-cysteine 422. Asparagine 288 carries N-linked (GlcNAc...) asparagine glycosylation.

The protein belongs to the glycosyltransferase 14 family. Post-translationally, N-glycosylated.

It is found in the golgi apparatus membrane. It catalyses the reaction a 3-O-[beta-D-galactosyl-(1-&gt;3)-N-acetyl-alpha-D-galactosaminyl]-L-seryl-[protein] + UDP-N-acetyl-alpha-D-glucosamine = 3-O-{beta-D-galactosyl-(1-&gt;3)-[N-acetyl-beta-D-glucosaminyl-(1-&gt;6)]-N-acetyl-alpha-D-galactosaminyl}-L-seryl-[protein] + UDP + H(+). It carries out the reaction a 3-O-[beta-D-galactosyl-(1-&gt;3)-N-acetyl-alpha-D-galactosaminyl]-L-threonyl-[protein] + UDP-N-acetyl-alpha-D-glucosamine = a 3-O-{beta-D-galactosyl-(1-&gt;3)-[N-acetyl-beta-D-glucosaminyl-(1-&gt;6)]-N-acetyl-alpha-D-galactosaminyl}-L-threonyl-[protein] + UDP + H(+). The catalysed reaction is a beta-D-Gal-(1-&gt;4)-beta-D-GlcNAc-(1-&gt;3)-beta-D-Gal-(1-&gt;4)-beta-D-GlcNAc derivative + UDP-N-acetyl-alpha-D-glucosamine = a beta-D-Gal-(1-&gt;4)-beta-D-GlcNAc-(1-&gt;3)-[beta-D-GlcNAc-(1-&gt;6)]-beta-D-Gal-(1-&gt;4)-N-acetyl-beta-D-glucosaminyl derivative + UDP + H(+). The enzyme catalyses 3-O-[N-acetyl-beta-D-glucosaminyl-(1-&gt;3)-N-acetyl-alpha-D-galactosaminyl]-L-seryl-[protein] + UDP-N-acetyl-alpha-D-glucosamine = 3-O-[N-acetyl-beta-D-glucosaminyl-(1-&gt;3)-[N-acetyl-beta-D-glucosaminyl-(1-&gt;6)]-N-acetyl-alpha-D-galactosaminyl]-L-seryl-[protein] + UDP + H(+). It catalyses the reaction a 3-O-[N-acetyl-beta-D-glucosaminyl-(1-&gt;3)-N-acetyl-alpha-D-galactosaminyl]-L-threonyl-[protein] + UDP-N-acetyl-alpha-D-glucosamine = 3-O-[N-acetyl-beta-D-glucosaminyl-(1-&gt;3)-[N-acetyl-beta-D-glucosaminyl-(1-&gt;6)]-N-acetyl-alpha-D-galactosaminyl]-L-threonyl-[protein] + UDP + H(+). It participates in protein modification; protein glycosylation. In terms of biological role, glycosyltransferase that can synthesize all known mucin beta 6 N-acetylglucosaminides. Mediates core 2 and core 4 O-glycan branching, 2 important steps in mucin-type biosynthesis. Also has I-branching enzyme activity by converting linear into branched poly-N-acetyllactosaminoglycans, leading to introduce the blood group I antigen during embryonic development. The chain is Beta-1,3-galactosyl-O-glycosyl-glycoprotein beta-1,6-N-acetylglucosaminyltransferase 3 (Gcnt3) from Rattus norvegicus (Rat).